Here is a 532-residue protein sequence, read N- to C-terminus: MGATKSKPREGGPRSRSLDIVEGSHQPFTSLSASQTPNKSLDSHRPPAQPFGGNCDLTPFGGINFSDTITSPQRTGPLAGGVTTFVALYDYESRTETDLSFKKGERLQIVNNTEGDWWLARSLSSGQTGYIPSNYVAPSDSIQAEEWYLGKITRREAERLLLSLENPRGTFLVRESETTKGAYCLSVSDYDANRGLNVKHYKIRKLDSGGFYITSRTQFISLQQLVAYYSKHADGLCHRLTTVCPTAKPQTQGLSRDAWEIPRDSLRLELKLGQGCFGEVWMGTWNGTTRVAIKTLKPGTMSPEAFLQEAQVMKKLRHEKLVQLYAVVSEEPIYIVTEYISKGSLLDFLKGEMGRYLRLPQLVDMAAQIASGMAYVERMNYVHRDLRAANILVGENLVCKVADFGLARLIEDNEYTARQGAKFPIKWTAPEAALYGRFTIKSDVWSFGILLTELTTKGRVPYPGMVNREVLDQVERGYRMPCPPDCPESLHDLMFQCWRKDPEERPTFEYLQAFLEDYFTATEPQYQPGDNL.

The segment at 1 to 52 (MGATKSKPREGGPRSRSLDIVEGSHQPFTSLSASQTPNKSLDSHRPPAQPFG) is disordered. A lipid anchor (N-myristoyl glycine) is attached at Gly2. Residues 7–19 (KPREGGPRSRSLD) show a composition bias toward basic and acidic residues. Residues 26–40 (QPFTSLSASQTPNKS) show a composition bias toward polar residues. In terms of domain architecture, SH3 spans 80 to 141 (GGVTTFVALY…PSNYVAPSDS (62 aa)). Positions 147 to 244 (WYLGKITRRE…GLCHRLTTVC (98 aa)) constitute an SH2 domain. In terms of domain architecture, Protein kinase spans 266-519 (LRLELKLGQG…YLQAFLEDYF (254 aa)). Residues 272–280 (LGQGCFGEV) and Lys294 contribute to the ATP site. The Proton acceptor role is filled by Asp385. Tyr415 carries the phosphotyrosine; by autocatalysis modification.

It belongs to the protein kinase superfamily. Tyr protein kinase family. SRC subfamily.

Its subcellular location is the cell membrane. The catalysed reaction is L-tyrosyl-[protein] + ATP = O-phospho-L-tyrosyl-[protein] + ADP + H(+). The sequence is that of Tyrosine-protein kinase Src-1 (src-a) from Xenopus laevis (African clawed frog).